The sequence spans 44 residues: Tachystatin-A1 (44 aa).

Cystine bridges form between Cys-4/Cys-24, Cys-11/Cys-29, and Cys-23/Cys-41.

Granular hemocytes, small secretory granules.

Its subcellular location is the secreted. Exhibits stronger antimicrobial activity against the Gram-positive bacteria (S.aureus (IC(50) is 4.2 ug/ml)) and fungi (C.albicans (IC(50) is 3.0 ug/ml) and P.pastoris (IC(50) is 0.5 ug/ml)) than Gram-negative bacteria (E.coli (IC(50) is 25 ug/ml)). Binds to chitin (8.4 uM are required to obtain 50% of binding). Does not cause hemolysis on sheep erythrocytes. Has no blocking activity on the P-type calcium channel. The sequence is that of Tachystatin-A1 from Tachypleus tridentatus (Japanese horseshoe crab).